A 311-amino-acid polypeptide reads, in one-letter code: Aspartate carbamoyltransferase catalytic subunit (311 aa).

Residues arginine 58 and threonine 59 each coordinate carbamoyl phosphate. Residue lysine 86 participates in L-aspartate binding. Carbamoyl phosphate is bound by residues arginine 108, histidine 136, and glutamine 139. Positions 169 and 223 each coordinate L-aspartate. Carbamoyl phosphate-binding residues include glycine 264 and proline 265.

The protein belongs to the aspartate/ornithine carbamoyltransferase superfamily. ATCase family. As to quaternary structure, heterododecamer (2C3:3R2) of six catalytic PyrB chains organized as two trimers (C3), and six regulatory PyrI chains organized as three dimers (R2).

It carries out the reaction carbamoyl phosphate + L-aspartate = N-carbamoyl-L-aspartate + phosphate + H(+). It functions in the pathway pyrimidine metabolism; UMP biosynthesis via de novo pathway; (S)-dihydroorotate from bicarbonate: step 2/3. Catalyzes the condensation of carbamoyl phosphate and aspartate to form carbamoyl aspartate and inorganic phosphate, the committed step in the de novo pyrimidine nucleotide biosynthesis pathway. The chain is Aspartate carbamoyltransferase catalytic subunit from Acidiphilium cryptum (strain JF-5).